A 1877-amino-acid chain; its full sequence is Protein TIC 214 (1877 aa).

The next 6 membrane-spanning stretches (helical) occupy residues 18 to 38 (IINSVVVVGLYYGFLTTFSVG), 64 to 84 (FITGQLMMFISIYYAPLHLAL), 87 to 107 (PHTITVLVLPYLLFHFFWKNH), 124 to 144 (LSIQCVFLNNLIFQLFNHFIL), 172 to 192 (VGWLIGHILFMKWVGLVLFWI), and 221 to 241 (IFRILLFITCVYYLGRIPSPI). 3 disordered regions span residues 246–313 (LKET…GKEK), 644–695 (DDFE…NSDR), and 774–795 (PEFKTSDSEEKEAKEEEKQKKE). Composition is skewed to acidic residues over residues 251–268 (ETEEGGESEEETDVEIET), 281–304 (GSTEEDPSLCSEEKEDPDKIDETE), and 645–659 (DFEEQEEEDEEESTE). Positions 685 to 695 (TSTKDTTNSDR) are enriched in basic and acidic residues.

The protein belongs to the TIC214 family. Part of the Tic complex.

It localises to the plastid. Its subcellular location is the chloroplast inner membrane. Functionally, involved in protein precursor import into chloroplasts. May be part of an intermediate translocation complex acting as a protein-conducting channel at the inner envelope. The chain is Protein TIC 214 from Chloranthus spicatus (Chulantree).